We begin with the raw amino-acid sequence, 253 residues long: 5-oxoprolinase subunit A (253 aa).

It belongs to the LamB/PxpA family. In terms of assembly, forms a complex composed of PxpA, PxpB and PxpC.

The catalysed reaction is 5-oxo-L-proline + ATP + 2 H2O = L-glutamate + ADP + phosphate + H(+). In terms of biological role, catalyzes the cleavage of 5-oxoproline to form L-glutamate coupled to the hydrolysis of ATP to ADP and inorganic phosphate. This Shouchella clausii (strain KSM-K16) (Alkalihalobacillus clausii) protein is 5-oxoprolinase subunit A.